A 458-amino-acid polypeptide reads, in one-letter code: UPF0210 protein MMP1427 (458 aa).

This sequence belongs to the UPF0210 family.

The polypeptide is UPF0210 protein MMP1427 (Methanococcus maripaludis (strain DSM 14266 / JCM 13030 / NBRC 101832 / S2 / LL)).